Consider the following 42-residue polypeptide: Snaclec lebecetin subunit alpha (42 aa).

The C-type lectin domain maps to 1–42; it reads DQDCLPGWSSHEGHCYKVFNLDKTWEDAEKFCTEQPSNGHLV. Cysteine 4 and cysteine 15 are disulfide-bonded.

Heterodimer of subunits alpha and beta; disulfide-linked. Ca(2+) serves as cofactor. Glycosylated. As to expression, expressed by the venom gland.

It is found in the secreted. Its function is as follows. Binds to the platelet GPIb/IX/V receptor system and inhibits ristocetin-induced platelet aggregation in human platelet-rich plasma. Strongly inhibits platelet aggregation induced by ADP, calcium ionophore, thrombin and collagen. Does not inhibit U46619-induced platelet aggregation. The polypeptide is Snaclec lebecetin subunit alpha (Macrovipera lebetinus (Levantine viper)).